Consider the following 402-residue polypeptide: S-adenosylmethionine synthase (402 aa).

Residue 137 to 142 participates in ATP binding; the sequence is GQGSAD.

Belongs to the AdoMet synthase 2 family. It depends on Mg(2+) as a cofactor.

The enzyme catalyses L-methionine + ATP + H2O = S-adenosyl-L-methionine + phosphate + diphosphate. The protein operates within amino-acid biosynthesis; S-adenosyl-L-methionine biosynthesis; S-adenosyl-L-methionine from L-methionine: step 1/1. In terms of biological role, catalyzes the formation of S-adenosylmethionine from methionine and ATP. This is S-adenosylmethionine synthase from Pyrobaculum aerophilum (strain ATCC 51768 / DSM 7523 / JCM 9630 / CIP 104966 / NBRC 100827 / IM2).